Consider the following 362-residue polypeptide: Dual-specificity RNA methyltransferase RlmN (362 aa).

Glu91 functions as the Proton acceptor in the catalytic mechanism. Residues Glu97–Asp333 form the Radical SAM core domain. Cys104 and Cys338 are disulfide-bonded. The [4Fe-4S] cluster site is built by Cys111, Cys115, and Cys118. S-adenosyl-L-methionine is bound by residues Gly164–Glu165, Ser196, Ser218–His220, and Asn295. Cys338 functions as the S-methylcysteine intermediate in the catalytic mechanism.

This sequence belongs to the radical SAM superfamily. RlmN family. Requires [4Fe-4S] cluster as cofactor.

It localises to the cytoplasm. It carries out the reaction adenosine(2503) in 23S rRNA + 2 reduced [2Fe-2S]-[ferredoxin] + 2 S-adenosyl-L-methionine = 2-methyladenosine(2503) in 23S rRNA + 5'-deoxyadenosine + L-methionine + 2 oxidized [2Fe-2S]-[ferredoxin] + S-adenosyl-L-homocysteine. The catalysed reaction is adenosine(37) in tRNA + 2 reduced [2Fe-2S]-[ferredoxin] + 2 S-adenosyl-L-methionine = 2-methyladenosine(37) in tRNA + 5'-deoxyadenosine + L-methionine + 2 oxidized [2Fe-2S]-[ferredoxin] + S-adenosyl-L-homocysteine. Specifically methylates position 2 of adenine 2503 in 23S rRNA and position 2 of adenine 37 in tRNAs. m2A2503 modification seems to play a crucial role in the proofreading step occurring at the peptidyl transferase center and thus would serve to optimize ribosomal fidelity. This chain is Dual-specificity RNA methyltransferase RlmN, found in Methylobacillus flagellatus (strain ATCC 51484 / DSM 6875 / VKM B-1610 / KT).